We begin with the raw amino-acid sequence, 246 residues long: Proteolipid protein DM gamma (246 aa).

4 consecutive transmembrane segments (helical) span residues 19-35 (LLAT…FCGC), 71-87 (VIYG…IILL), 118-134 (VFLT…VFGF), and 206-222 (FIVA…ALLI).

It belongs to the myelin proteolipid protein family. In terms of tissue distribution, highly expressed in white matter in myelinating shark brain.

It is found in the membrane. The chain is Proteolipid protein DM gamma from Squalus acanthias (Spiny dogfish).